Reading from the N-terminus, the 225-residue chain is Thymidylate kinase (225 aa).

10–17 (GPEGAGKT) contributes to the ATP binding site.

This sequence belongs to the thymidylate kinase family.

It catalyses the reaction dTMP + ATP = dTDP + ADP. In terms of biological role, phosphorylation of dTMP to form dTDP in both de novo and salvage pathways of dTTP synthesis. This chain is Thymidylate kinase, found in Geobacillus thermodenitrificans (strain NG80-2).